The chain runs to 358 residues: 3-ketosteroid-9-alpha-monooxygenase, ferredoxin reductase component (358 aa).

One can recognise an FAD-binding FR-type domain in the interval 12–124; the sequence is DHVLELQIAE…LAPSGNFVPT (113 aa). The region spanning 269-358 is the 2Fe-2S ferredoxin-type domain; it reads ATAVVELDGQ…SDSVEVTYDE (90 aa). Cysteine 305, cysteine 310, cysteine 313, and cysteine 343 together coordinate [2Fe-2S] cluster.

In terms of assembly, monomer. The two-component system 3-ketosteroid-9-alpha-monooxygenase is composed of an oxygenase component KshA and a reductase component KshB. The cofactor is FAD. [2Fe-2S] cluster serves as cofactor.

It carries out the reaction androsta-1,4-diene-3,17-dione + 2 reduced [2Fe-2S]-[ferredoxin] + O2 + 2 H(+) = 9alpha-hydroxyandrosta-1,4-diene-3,17-dione + 2 oxidized [2Fe-2S]-[ferredoxin] + H2O. Its pathway is lipid metabolism; steroid biosynthesis. Its function is as follows. Involved in the degradation of cholesterol. Catalyzes the introduction of a 9a-hydroxyl moiety into 1,4-androstadiene-3,17-dione (ADD) to yield the 9alpha-hydroxy-1,4-androstadiene-3,17-dione (9OHADD) intermediate which spontaneously form 3-hydroxy-9,10-seconandrost-1,3,5(10)-triene-9,17-dione (HSA) via the meta-cleavage of ring B with concomitant aromatization of ring A. The chain is 3-ketosteroid-9-alpha-monooxygenase, ferredoxin reductase component (hmp) from Mycobacterium tuberculosis (strain CDC 1551 / Oshkosh).